The chain runs to 155 residues: Probable calcium-binding protein CML44 (155 aa).

3 EF-hand domains span residues 6–41 (ITTNDLRRMFKTLDKNQDGLVTLDELLWILDKLGWA), 85–120 (DNDEAIARAFNVFDVNGDGYISAEELRDVLERLGFE), and 130–155 (RMIRVHDKNLDGFVDFEEFKNMILHV). The Ca(2+) site is built by Asp-19, Asn-21, Asp-23, Glu-30, Asp-98, Asn-100, Asp-102, Tyr-104, and Glu-109.

Its function is as follows. Potential calcium sensor. This is Probable calcium-binding protein CML44 (CML44) from Arabidopsis thaliana (Mouse-ear cress).